The chain runs to 171 residues: Glycine cleavage system H protein 4 (171 aa).

Residues 30-112 enclose the Lipoyl-binding domain; it reads FAEVGITDYA…YEAGWIAVIE (83 aa). N6-lipoyllysine is present on Lys71. A disordered region spans residues 139–171; the sequence is EKEEEVEVKEEELIETESIEELSEEELGYEENK.

Belongs to the GcvH family. As to quaternary structure, the glycine cleavage system is composed of four proteins: P, T, L and H. (R)-lipoate serves as cofactor.

The glycine cleavage system catalyzes the degradation of glycine. The H protein shuttles the methylamine group of glycine from the P protein to the T protein. This Aquifex aeolicus (strain VF5) protein is Glycine cleavage system H protein 4.